The following is a 202-amino-acid chain: Complement component C8 gamma chain (202 aa).

Positions 1 to 23 (MVLRGRAVLLAVLLAAGSLGRWA) are cleaved as a signal peptide. Cysteines 96 and 188 form a disulfide. N-linked (GlcNAc...) asparagine glycosylation occurs at N173.

This sequence belongs to the calycin superfamily. Lipocalin family. Heterotrimer of 3 chains: alpha (C8A), beta (C8B) and gamma (C8G); the alpha and gamma chains are disulfide bonded. Component of the membrane attack complex (MAC), composed of complement C5b, C6, C7, C8A, C8B, C8G and multiple copies of the pore-forming subunit C9.

The protein resides in the secreted. It localises to the target cell membrane. Its activity is regulated as follows. Membrane attack complex (MAC) assembly is inhibited by CD59, thereby protecting self-cells from damage during complement activation. MAC assembly is also inhibited by clusterin (CLU) chaperones that inhibit polymerization of C9. In terms of biological role, component of the membrane attack complex (MAC), a multiprotein complex activated by the complement cascade, which inserts into a target cell membrane and forms a pore, leading to target cell membrane rupture and cell lysis. The MAC is initiated by proteolytic cleavage of C5 into complement C5b in response to the classical, alternative, lectin and GZMK complement pathways. The complement pathways consist in a cascade of proteins that leads to phagocytosis and breakdown of pathogens and signaling that strengthens the adaptive immune system. C8G, together with C8A and C8B, inserts into the target membrane, but does not form pores by itself. During MAC assembly, associates with C5b, C6 and C7 to form the C5b8 intermediate complex that inserts into the target membrane and traverses the bilayer increasing membrane rigidity. The protein is Complement component C8 gamma chain (C8G) of Oryctolagus cuniculus (Rabbit).